Here is a 186-residue protein sequence, read N- to C-terminus: Small ribosomal subunit protein eS7 (186 aa).

It belongs to the eukaryotic ribosomal protein eS7 family. Component of the small ribosomal subunit. Mature ribosomes consist of a small (40S) and a large (60S) subunit. The 40S subunit contains about 32 different proteins and 1 molecule of RNA (18S). The 60S subunit contains 45 different proteins and 3 molecules of RNA (25S, 5.8S and 5S).

It is found in the cytoplasm. Its function is as follows. Component of the ribosome, a large ribonucleoprotein complex responsible for the synthesis of proteins in the cell. The small ribosomal subunit (SSU) binds messenger RNAs (mRNAs) and translates the encoded message by selecting cognate aminoacyl-transfer RNA (tRNA) molecules. The large subunit (LSU) contains the ribosomal catalytic site termed the peptidyl transferase center (PTC), which catalyzes the formation of peptide bonds, thereby polymerizing the amino acids delivered by tRNAs into a polypeptide chain. The nascent polypeptides leave the ribosome through a tunnel in the LSU and interact with protein factors that function in enzymatic processing, targeting, and the membrane insertion of nascent chains at the exit of the ribosomal tunnel. RPS7A is involved in nucleolar processing of pre-18S ribosomal RNA and ribosome assembly. The protein is Small ribosomal subunit protein eS7 (RPS7A) of Candida albicans (strain SC5314 / ATCC MYA-2876) (Yeast).